The chain runs to 101 residues: Small ribosomal subunit protein uS14 (101 aa).

The tract at residues methionine 1–alanine 26 is disordered. A compositionally biased stretch (basic residues) spans glutamate 11–alanine 26.

The protein belongs to the universal ribosomal protein uS14 family. As to quaternary structure, part of the 30S ribosomal subunit. Contacts proteins S3 and S10.

Binds 16S rRNA, required for the assembly of 30S particles and may also be responsible for determining the conformation of the 16S rRNA at the A site. This is Small ribosomal subunit protein uS14 from Rickettsia felis (strain ATCC VR-1525 / URRWXCal2) (Rickettsia azadi).